Here is a 265-residue protein sequence, read N- to C-terminus: Ribosomal RNA small subunit methyltransferase A (265 aa).

S-adenosyl-L-methionine-binding residues include asparagine 13, leucine 15, glycine 40, glutamate 61, aspartate 85, and asparagine 103.

Belongs to the class I-like SAM-binding methyltransferase superfamily. rRNA adenine N(6)-methyltransferase family. RsmA subfamily.

The protein localises to the cytoplasm. It carries out the reaction adenosine(1518)/adenosine(1519) in 16S rRNA + 4 S-adenosyl-L-methionine = N(6)-dimethyladenosine(1518)/N(6)-dimethyladenosine(1519) in 16S rRNA + 4 S-adenosyl-L-homocysteine + 4 H(+). Specifically dimethylates two adjacent adenosines (A1518 and A1519) in the loop of a conserved hairpin near the 3'-end of 16S rRNA in the 30S particle. May play a critical role in biogenesis of 30S subunits. This Aromatoleum aromaticum (strain DSM 19018 / LMG 30748 / EbN1) (Azoarcus sp. (strain EbN1)) protein is Ribosomal RNA small subunit methyltransferase A.